Consider the following 260-residue polypeptide: MAVVTMKQLLESGTNFGHSTRKWNPKMKKYIFTSRNGIHIIDIKKTSEKIEEAYQELSKIVNQGGKVLFLGTKKQIQTSIMEESKRCGQYYVNHRWLGGILTNFHTILKRIQLLHDLHKQEEDGVWKKLPKKEVVQLKRKRDKLEKFLGGIKDMKELPQALFVVDLEKEKNAVAEARKLNIKVFSMVDTNCDPDLVDYIIPANDDAIRSVKLITWIIANACIEGSGGVAEKPEQFDAKNVLKPKLPYQPNRRPYQETVKK.

The interval 240–260 (VLKPKLPYQPNRRPYQETVKK) is disordered.

The protein belongs to the universal ribosomal protein uS2 family.

The protein is Small ribosomal subunit protein uS2 of Phytoplasma australiense.